Here is a 241-residue protein sequence, read N- to C-terminus: 2-C-methyl-D-erythritol 4-phosphate cytidylyltransferase (241 aa).

It belongs to the IspD/TarI cytidylyltransferase family. IspD subfamily. As to quaternary structure, homodimer.

It carries out the reaction 2-C-methyl-D-erythritol 4-phosphate + CTP + H(+) = 4-CDP-2-C-methyl-D-erythritol + diphosphate. It participates in isoprenoid biosynthesis; isopentenyl diphosphate biosynthesis via DXP pathway; isopentenyl diphosphate from 1-deoxy-D-xylulose 5-phosphate: step 2/6. In terms of biological role, catalyzes the formation of 4-diphosphocytidyl-2-C-methyl-D-erythritol from CTP and 2-C-methyl-D-erythritol 4-phosphate (MEP). In Yersinia pestis, this protein is 2-C-methyl-D-erythritol 4-phosphate cytidylyltransferase.